A 302-amino-acid chain; its full sequence is Acetyl-coenzyme A carboxylase carboxyl transferase subunit beta (302 aa).

One can recognise a CoA carboxyltransferase N-terminal domain in the interval 25-294 (VWTKCDSCGQ…PQEDIVTEAA (270 aa)). Residues Cys29, Cys32, Cys48, and Cys51 each coordinate Zn(2+). The C4-type zinc-finger motif lies at 29–51 (CDSCGQVLYRAELERNLEVCPKC).

The protein belongs to the AccD/PCCB family. As to quaternary structure, acetyl-CoA carboxylase is a heterohexamer composed of biotin carboxyl carrier protein (AccB), biotin carboxylase (AccC) and two subunits each of ACCase subunit alpha (AccA) and ACCase subunit beta (AccD). The cofactor is Zn(2+).

It is found in the cytoplasm. The enzyme catalyses N(6)-carboxybiotinyl-L-lysyl-[protein] + acetyl-CoA = N(6)-biotinyl-L-lysyl-[protein] + malonyl-CoA. Its pathway is lipid metabolism; malonyl-CoA biosynthesis; malonyl-CoA from acetyl-CoA: step 1/1. Functionally, component of the acetyl coenzyme A carboxylase (ACC) complex. Biotin carboxylase (BC) catalyzes the carboxylation of biotin on its carrier protein (BCCP) and then the CO(2) group is transferred by the transcarboxylase to acetyl-CoA to form malonyl-CoA. The sequence is that of Acetyl-coenzyme A carboxylase carboxyl transferase subunit beta from Erwinia tasmaniensis (strain DSM 17950 / CFBP 7177 / CIP 109463 / NCPPB 4357 / Et1/99).